The chain runs to 49 residues: Large ribosomal subunit protein bL33B (49 aa).

This sequence belongs to the bacterial ribosomal protein bL33 family.

This Acholeplasma laidlawii (strain PG-8A) protein is Large ribosomal subunit protein bL33B.